The following is a 131-amino-acid chain: MTTKRKPYVRPMTSTWWKKLPFYRFYMLREGTAVPAVWFSIELIFGLFALKHGAESWMGFVGFLQNPVVVILNLITLAAALLHTKTWFELTPKAANIIVKDEKMGPEPIIKGLWVVTAVVTVVILYVALFW.

3 consecutive transmembrane segments (helical) span residues 30 to 50 (EGTA…LFAL), 57 to 77 (WMGF…LITL), and 109 to 129 (IIKG…YVAL).

Belongs to the FrdC family. In terms of assembly, part of an enzyme complex containing four subunits: a flavoprotein (FrdA), an iron-sulfur protein (FrdB), and two hydrophobic anchor proteins (FrdC and FrdD).

It is found in the cell inner membrane. Its function is as follows. Two distinct, membrane-bound, FAD-containing enzymes are responsible for the catalysis of fumarate and succinate interconversion; fumarate reductase is used in anaerobic growth, and succinate dehydrogenase is used in aerobic growth. Anchors the catalytic components of the fumarate reductase complex to the cell inner membrane, binds quinones. The sequence is that of Fumarate reductase subunit C from Salmonella heidelberg (strain SL476).